The primary structure comprises 63 residues: Large ribosomal subunit protein bL28 (63 aa).

The interval 1-20 (MSKRCAITGKGPMVGNNVSH) is disordered.

It belongs to the bacterial ribosomal protein bL28 family.

This is Large ribosomal subunit protein bL28 from Campylobacter concisus (strain 13826).